A 313-amino-acid polypeptide reads, in one-letter code: Protein FixB (313 aa).

255 to 283 (LYLAVGISGQIQHMVGANASQTIFAINKD) serves as a coordination point for FAD.

The protein belongs to the ETF alpha-subunit/FixB family. Heterodimer of FixA and FixB.

Its pathway is amine and polyamine metabolism; carnitine metabolism. Required for anaerobic carnitine reduction. May bring reductant to CaiA. The sequence is that of Protein FixB from Escherichia coli (strain K12 / MC4100 / BW2952).